We begin with the raw amino-acid sequence, 661 residues long: UvrABC system protein B (661 aa).

The 387-residue stretch at 28 to 414 (KGVKEGKRHQ…HTDEMIEQII (387 aa)) folds into the Helicase ATP-binding domain. 41 to 48 (GATGTGKT) is an ATP binding site. The Beta-hairpin signature appears at 94–117 (YYDYYQPEAYVPSTDTFIEKDASI). Residues 432–598 (QIDDLLSEIQ…TINKKIHDVI (167 aa)) form the Helicase C-terminal domain. Residues 604–625 (NDETNEKQQTELPKKMTKKERQ) are disordered. Residues 607–617 (TNEKQQTELPK) are compositionally biased toward basic and acidic residues. Positions 625–660 (QKTIENIEKEMKKAAKDLDFEKATELRDMLFELKSE) constitute a UVR domain.

The protein belongs to the UvrB family. In terms of assembly, forms a heterotetramer with UvrA during the search for lesions. Interacts with UvrC in an incision complex.

It is found in the cytoplasm. The UvrABC repair system catalyzes the recognition and processing of DNA lesions. A damage recognition complex composed of 2 UvrA and 2 UvrB subunits scans DNA for abnormalities. Upon binding of the UvrA(2)B(2) complex to a putative damaged site, the DNA wraps around one UvrB monomer. DNA wrap is dependent on ATP binding by UvrB and probably causes local melting of the DNA helix, facilitating insertion of UvrB beta-hairpin between the DNA strands. Then UvrB probes one DNA strand for the presence of a lesion. If a lesion is found the UvrA subunits dissociate and the UvrB-DNA preincision complex is formed. This complex is subsequently bound by UvrC and the second UvrB is released. If no lesion is found, the DNA wraps around the other UvrB subunit that will check the other stand for damage. The sequence is that of UvrABC system protein B from Staphylococcus haemolyticus (strain JCSC1435).